We begin with the raw amino-acid sequence, 330 residues long: Phenylalanine--tRNA ligase alpha subunit (330 aa).

Residue glutamate 255 coordinates Mg(2+).

It belongs to the class-II aminoacyl-tRNA synthetase family. Phe-tRNA synthetase alpha subunit type 1 subfamily. In terms of assembly, tetramer of two alpha and two beta subunits. It depends on Mg(2+) as a cofactor.

It is found in the cytoplasm. It catalyses the reaction tRNA(Phe) + L-phenylalanine + ATP = L-phenylalanyl-tRNA(Phe) + AMP + diphosphate + H(+). In Acinetobacter baylyi (strain ATCC 33305 / BD413 / ADP1), this protein is Phenylalanine--tRNA ligase alpha subunit.